The following is a 430-amino-acid chain: Tyrosine--tRNA ligase (430 aa).

Residue Tyr32 coordinates L-tyrosine. Residues 37–46 (PTADSLHIGH) carry the 'HIGH' region motif. L-tyrosine is bound by residues Tyr172 and Gln176. The short motif at 232 to 236 (KFGKT) is the 'KMSKS' region element. Residue Lys235 coordinates ATP. Residues 362–429 (VKAVDLFVDN…GKKNYYLIIA (68 aa)) form the S4 RNA-binding domain.

Belongs to the class-I aminoacyl-tRNA synthetase family. TyrS type 1 subfamily. As to quaternary structure, homodimer.

The protein localises to the cytoplasm. It carries out the reaction tRNA(Tyr) + L-tyrosine + ATP = L-tyrosyl-tRNA(Tyr) + AMP + diphosphate + H(+). Functionally, catalyzes the attachment of tyrosine to tRNA(Tyr) in a two-step reaction: tyrosine is first activated by ATP to form Tyr-AMP and then transferred to the acceptor end of tRNA(Tyr). The chain is Tyrosine--tRNA ligase from Bacteroides fragilis (strain ATCC 25285 / DSM 2151 / CCUG 4856 / JCM 11019 / LMG 10263 / NCTC 9343 / Onslow / VPI 2553 / EN-2).